The sequence spans 146 residues: Hemoglobin subunit beta-A/B (146 aa).

Gly-1 is modified (N-acetylserine; in variant beta-B). The Globin domain occupies 2–146 (FLTAEEKGLV…VANALAHKYH (145 aa)). Phosphoserine is present on Ser-44. Lys-59 carries the N6-acetyllysine modification. Residue His-63 participates in heme b binding. N6-acetyllysine is present on Lys-82. His-92 provides a ligand contact to heme b. At Cys-93 the chain carries S-nitrosocysteine. An N6-acetyllysine modification is found at Lys-144.

The protein belongs to the globin family. As to quaternary structure, heterotetramer of two alpha chains and two beta chains. As to expression, red blood cells.

Its function is as follows. Involved in oxygen transport from the lung to the various peripheral tissues. The polypeptide is Hemoglobin subunit beta-A/B (HBB) (Felis catus (Cat)).